A 252-amino-acid polypeptide reads, in one-letter code: 1-(5-phosphoribosyl)-5-[(5-phosphoribosylamino)methylideneamino] imidazole-4-carboxamide isomerase (252 aa).

The active-site Proton acceptor is D8. The Proton donor role is filled by D129.

This sequence belongs to the HisA/HisF family.

Its subcellular location is the cytoplasm. The enzyme catalyses 1-(5-phospho-beta-D-ribosyl)-5-[(5-phospho-beta-D-ribosylamino)methylideneamino]imidazole-4-carboxamide = 5-[(5-phospho-1-deoxy-D-ribulos-1-ylimino)methylamino]-1-(5-phospho-beta-D-ribosyl)imidazole-4-carboxamide. It participates in amino-acid biosynthesis; L-histidine biosynthesis; L-histidine from 5-phospho-alpha-D-ribose 1-diphosphate: step 4/9. The polypeptide is 1-(5-phosphoribosyl)-5-[(5-phosphoribosylamino)methylideneamino] imidazole-4-carboxamide isomerase (Synechococcus sp. (strain RCC307)).